A 322-amino-acid chain; its full sequence is Protein SEC13 homolog (322 aa).

V2 bears the N-acetylvaline mark. 6 WD repeats span residues 11 to 50 (SHED…QILI), 55 to 96 (GHEG…WEKS), 101 to 144 (GHDS…EVKK), 148 to 204 (AHTI…QWKE), 210 to 253 (AHSD…SNTW), and 260 to 299 (KFND…QWVC). S184 carries the post-translational modification Phosphoserine. S309 is modified (phosphoserine).

Belongs to the WD repeat SEC13 family. At the nuclear pore: component of the Y-shaped Nup107-160 subcomplex of the nuclear pore complex (NPC). The Nup107-160 subcomplex includes NUP160, NUP133, NUP107, NUP98, NUP85, NUP43, NUP37, SEH1 and SEC13. At the COPII coat complex: interacts with SEC31A and SEC31B. Interacts with SEC16A. Interacts with SEC16B. Component of the GATOR2 subcomplex, composed of MIOS, SEC13, SEH1L, WDR24 and WDR59. The GATOR2 complex interacts with CASTOR1 and CASTOR2; the interaction is negatively regulated by arginine. The GATOR2 complex interacts with SESN1, SESN2 and SESN3; the interaction is negatively regulated by amino acids.

The protein localises to the cytoplasmic vesicle. It localises to the COPII-coated vesicle membrane. Its subcellular location is the endoplasmic reticulum membrane. The protein resides in the nucleus. It is found in the nuclear pore complex. The protein localises to the lysosome membrane. With respect to regulation, the GATOR2 complex is negatively regulated by the upstream amino acid sensors CASTOR1 and SESN2, which sequester the GATOR2 complex in absence of amino acids. In the presence of abundant amino acids, GATOR2 is released from CASTOR1 and SESN2 and activated. Functionally, functions as a component of the nuclear pore complex (NPC) and the COPII coat. At the endoplasmic reticulum, SEC13 is involved in the biogenesis of COPII-coated vesicles. Required for the exit of adipsin (CFD/ADN), an adipocyte-secreted protein from the endoplasmic reticulum. As a component of the GATOR2 complex, functions as an activator of the amino acid-sensing branch of the mTORC1 signaling pathway. The GATOR2 complex indirectly activates mTORC1 through the inhibition of the GATOR1 subcomplex. GATOR2 probably acts as an E3 ubiquitin-protein ligase toward GATOR1. In the presence of abundant amino acids, the GATOR2 complex mediates ubiquitination of the NPRL2 core component of the GATOR1 complex, leading to GATOR1 inactivation. In the absence of amino acids, GATOR2 is inhibited, activating the GATOR1 complex. Within the GATOR2 complex, SEC13 and SEH1L are required to stabilize the complex. The sequence is that of Protein SEC13 homolog from Homo sapiens (Human).